A 216-amino-acid chain; its full sequence is Ion-translocating oxidoreductase complex subunit G (216 aa).

Residues Ala14–Ile34 traverse the membrane as a helical segment. Thr181 is modified (FMN phosphoryl threonine).

It belongs to the RnfG family. The complex is composed of six subunits: RnfA, RnfB, RnfC, RnfD, RnfE and RnfG. The cofactor is FMN.

The protein resides in the cell inner membrane. Functionally, part of a membrane-bound complex that couples electron transfer with translocation of ions across the membrane. This Buchnera aphidicola subsp. Baizongia pistaciae (strain Bp) protein is Ion-translocating oxidoreductase complex subunit G.